The chain runs to 95 residues: Large ribosomal subunit protein uL23 (95 aa).

Belongs to the universal ribosomal protein uL23 family. In terms of assembly, part of the 50S ribosomal subunit. Contacts protein L29, and trigger factor when it is bound to the ribosome.

Its function is as follows. One of the early assembly proteins it binds 23S rRNA. One of the proteins that surrounds the polypeptide exit tunnel on the outside of the ribosome. Forms the main docking site for trigger factor binding to the ribosome. In Thermodesulfovibrio yellowstonii (strain ATCC 51303 / DSM 11347 / YP87), this protein is Large ribosomal subunit protein uL23.